The following is a 193-amino-acid chain: Rho-related protein racF1 (193 aa).

10–17 is a GTP binding site; that stretch reads GDGAVGKT. Positions 32 to 40 match the Effector region motif; sequence YIPTVFDNY. GTP-binding positions include 57-61 and 115-118; these read DTAGQ and TKQD. Residue cysteine 190 is modified to Cysteine methyl ester. Residue cysteine 190 is the site of S-geranylgeranyl cysteine attachment. The propeptide at 191–193 is removed in mature form; it reads TIM.

It belongs to the small GTPase superfamily. Rho family. Interacts with pakB.

The protein localises to the membrane. Might act in concert and/or share functions with other members of the RHO family in the regulation of a subset of cytoskeletal rearrangements that are required for these processes. In Dictyostelium discoideum (Social amoeba), this protein is Rho-related protein racF1 (racF1).